The primary structure comprises 265 residues: Ribosomal RNA small subunit methyltransferase A (265 aa).

Residues His13, Leu15, Gly40, Glu61, Asp85, and Asn103 each contribute to the S-adenosyl-L-methionine site.

This sequence belongs to the class I-like SAM-binding methyltransferase superfamily. rRNA adenine N(6)-methyltransferase family. RsmA subfamily.

The protein localises to the cytoplasm. It carries out the reaction adenosine(1518)/adenosine(1519) in 16S rRNA + 4 S-adenosyl-L-methionine = N(6)-dimethyladenosine(1518)/N(6)-dimethyladenosine(1519) in 16S rRNA + 4 S-adenosyl-L-homocysteine + 4 H(+). In terms of biological role, specifically dimethylates two adjacent adenosines (A1518 and A1519) in the loop of a conserved hairpin near the 3'-end of 16S rRNA in the 30S particle. May play a critical role in biogenesis of 30S subunits. The protein is Ribosomal RNA small subunit methyltransferase A of Bordetella bronchiseptica (strain ATCC BAA-588 / NCTC 13252 / RB50) (Alcaligenes bronchisepticus).